Consider the following 106-residue polypeptide: PAT complex subunit Asterix (106 aa).

Residues 1–10 (MSANSMSDPR) are compositionally biased toward polar residues. The interval 1–29 (MSANSMSDPRSPNKVLRYKPPPSECNPAL) is disordered. Ser-2 is modified (N-acetylserine). Residues 2 to 32 (SANSMSDPRSPNKVLRYKPPPSECNPALDDP) lie on the Cytoplasmic side of the membrane. A helical membrane pass occupies residues 33 to 51 (TPDYMNLLGMIFSMCGLML). Position 52 (Lys-52) is a topological domain, lumenal. The helical transmembrane segment at 53–70 (LKWCAWVAVYCSFISFAN) threads the bilayer. The Cytoplasmic portion of the chain corresponds to 71-74 (SRSS). A helical membrane pass occupies residues 75-95 (EDTKQMMSSFMLSISAVVMSY). The Lumenal segment spans residues 96-106 (LQNPQPMTPPW).

This sequence belongs to the Asterix family. In terms of assembly, component of the PAT complex, composed of WDR83OS/Asterix and CCDC47. The PAT complex is part of the multi-pass translocon (MPT) complex, composed of three subcomplexes, the GEL complex (composed of RAB5IF/OPTI and TMCO1), the BOS complex (composed of NCLN/Nicalin, NOMO1 and TMEM147) and the PAT complex (composed of WDR83OS/Asterix and CCDC47). The MPT complex associates with the SEC61 complex.

It is found in the endoplasmic reticulum membrane. Component of the multi-pass translocon (MPT) complex that mediates insertion of multi-pass membrane proteins into the lipid bilayer of membranes. The MPT complex takes over after the SEC61 complex: following membrane insertion of the first few transmembrane segments of proteins by the SEC61 complex, the MPT complex occludes the lateral gate of the SEC61 complex to promote insertion of subsequent transmembrane regions. Within the MPT complex, the PAT subcomplex sequesters any highly polar regions in the transmembrane domains away from the non-polar membrane environment until they can be buried in the interior of the fully assembled protein. Within the PAT subcomplex, WDR83OS/Asterix binds to and redirects the substrate to a location behind the SEC61 complex. The protein is PAT complex subunit Asterix (WDR83OS) of Sus scrofa (Pig).